The sequence spans 144 residues: uncharacterized protein (144 aa).

This is an uncharacterized protein from Escherichia coli O157:H7.